Consider the following 308-residue polypeptide: ADP,ATP carrier protein (308 aa).

Solcar repeat units follow at residues 6-99 (KNFM…FKRM), 110-203 (KWFA…LKPV), and 211-297 (NNFL…LQVI). Helical transmembrane passes span 8-35 (FMVDFLAGGLSAAVSKTAAAPIERVKLL), 76-100 (TANVIRYFPTQALNFAFKDKFKRMF), 108-128 (YWKWFAGNMASGGAAGAVSLS), 179-200 (FNISCVGIVVYRGLYFGMYDSL), and 214-234 (LAAFLLGWGITIGAGLASYPI). R81 and K93 together coordinate ADP. R238 provides a ligand contact to ADP. The tract at residues 238 to 243 (RRRMMM) is important for transport activity. A Nucleotide carrier signature motif motif is present at residues 238–243 (RRRMMM). Residues 274 to 294 (AGANILRAVAGAGVLAGYDQL) traverse the membrane as a helical segment.

The protein belongs to the mitochondrial carrier (TC 2.A.29) family. As to quaternary structure, monomer.

Its subcellular location is the mitochondrion inner membrane. It catalyses the reaction ADP(in) + ATP(out) = ADP(out) + ATP(in). The matrix-open state (m-state) is inhibited by the membrane-permeable bongkrekic acid (BKA). The cytoplasmic-open state (c-state) is inhibited by the membrane-impermeable toxic inhibitor carboxyatractyloside (CATR). Functionally, ADP:ATP antiporter that mediates import of ADP into the mitochondrial matrix for ATP synthesis, and export of ATP out to fuel the cell. Cycles between the cytoplasmic-open state (c-state) and the matrix-open state (m-state): operates by the alternating access mechanism with a single substrate-binding site intermittently exposed to either the cytosolic (c-state) or matrix (m-state) side of the inner mitochondrial membrane. This Chlamydomonas reinhardtii (Chlamydomonas smithii) protein is ADP,ATP carrier protein (ABT).